A 153-amino-acid polypeptide reads, in one-letter code: Transcriptional repressor NrdR (153 aa).

The segment at 3-34 (CPSCFHNGTRVLDSRPVDEGRSIRRRRECESC) is a zinc-finger region. The 91-residue stretch at 49–139 (LIVVKKEGTR…VYRQFKDLNV (91 aa)) folds into the ATP-cone domain.

This sequence belongs to the NrdR family. It depends on Zn(2+) as a cofactor.

Negatively regulates transcription of bacterial ribonucleotide reductase nrd genes and operons by binding to NrdR-boxes. This is Transcriptional repressor NrdR from Bacillus cytotoxicus (strain DSM 22905 / CIP 110041 / 391-98 / NVH 391-98).